We begin with the raw amino-acid sequence, 351 residues long: Dihydroorotate dehydrogenase (quinone) (351 aa).

FMN-binding positions include 61 to 65 and Thr-85; that span reads AGLDK. Lys-65 serves as a coordination point for substrate. 110 to 114 is a substrate binding site; that stretch reads NRMGF. FMN contacts are provided by Asn-139 and Asn-172. Asn-172 lines the substrate pocket. Catalysis depends on Ser-175, which acts as the Nucleophile. Asn-177 lines the substrate pocket. 2 residues coordinate FMN: Lys-217 and Thr-245. Residue 246 to 247 participates in substrate binding; it reads NT. Residues Gly-268, Gly-297, and 318–319 each bind FMN; that span reads YS.

The protein belongs to the dihydroorotate dehydrogenase family. Type 2 subfamily. As to quaternary structure, monomer. FMN is required as a cofactor.

Its subcellular location is the cell membrane. It catalyses the reaction (S)-dihydroorotate + a quinone = orotate + a quinol. Its pathway is pyrimidine metabolism; UMP biosynthesis via de novo pathway; orotate from (S)-dihydroorotate (quinone route): step 1/1. In terms of biological role, catalyzes the conversion of dihydroorotate to orotate with quinone as electron acceptor. The polypeptide is Dihydroorotate dehydrogenase (quinone) (Stenotrophomonas maltophilia (strain R551-3)).